Reading from the N-terminus, the 956-residue chain is Isoleucine--tRNA ligase (956 aa).

The short motif at 60–70 (PYANGHIHVGH) is the 'HIGH' region element. L-isoleucyl-5'-AMP is bound at residue Glu-583. Positions 624-628 (KMSKS) match the 'KMSKS' region motif. ATP is bound at residue Lys-627. Zn(2+) contacts are provided by Cys-921, Cys-924, Cys-938, and Cys-941.

The protein belongs to the class-I aminoacyl-tRNA synthetase family. IleS type 1 subfamily. As to quaternary structure, monomer. The cofactor is Zn(2+).

It is found in the cytoplasm. The enzyme catalyses tRNA(Ile) + L-isoleucine + ATP = L-isoleucyl-tRNA(Ile) + AMP + diphosphate. Catalyzes the attachment of isoleucine to tRNA(Ile). As IleRS can inadvertently accommodate and process structurally similar amino acids such as valine, to avoid such errors it has two additional distinct tRNA(Ile)-dependent editing activities. One activity is designated as 'pretransfer' editing and involves the hydrolysis of activated Val-AMP. The other activity is designated 'posttransfer' editing and involves deacylation of mischarged Val-tRNA(Ile). The polypeptide is Isoleucine--tRNA ligase (Aquifex aeolicus (strain VF5)).